Here is a 375-residue protein sequence, read N- to C-terminus: Alcohol dehydrogenase 1 (375 aa).

Serine 1 carries the post-translational modification N-acetylserine. Cysteine 46, histidine 67, cysteine 97, cysteine 100, cysteine 103, cysteine 111, and cysteine 175 together coordinate Zn(2+). NAD(+)-binding positions include glycine 200 to glycine 205, aspartate 224, lysine 229, valine 293 to valine 295, and arginine 370.

Belongs to the zinc-containing alcohol dehydrogenase family. Class-I subfamily. Homodimer. Zn(2+) serves as cofactor.

It is found in the cytoplasm. The catalysed reaction is a primary alcohol + NAD(+) = an aldehyde + NADH + H(+). It catalyses the reaction a secondary alcohol + NAD(+) = a ketone + NADH + H(+). In Coturnix japonica (Japanese quail), this protein is Alcohol dehydrogenase 1 (ADH1).